Reading from the N-terminus, the 187-residue chain is MASTADFKNGLVLQIDGQLWSIVEFQHVKPGKGPAFVRTKLKNVLSGKVVDKTYNAGVKVETATVDRRDTTYLYRDGSDFVFMDSQDYEQHPLPESLVGDAARFLLEGMPVQVAFHDGAPLYIELPVTVEFVVTHTEPGLQGDRSSAGTKPATLETGAQINVPLFINTGDKLKVDSRDGGYLGRVNA.

The protein belongs to the elongation factor P family.

Its subcellular location is the cytoplasm. It participates in protein biosynthesis; polypeptide chain elongation. Involved in peptide bond synthesis. Stimulates efficient translation and peptide-bond synthesis on native or reconstituted 70S ribosomes in vitro. Probably functions indirectly by altering the affinity of the ribosome for aminoacyl-tRNA, thus increasing their reactivity as acceptors for peptidyl transferase. This is Elongation factor P from Mycobacterium ulcerans (strain Agy99).